Consider the following 195-residue polypeptide: FMN-dependent NADH:quinone oxidoreductase (195 aa).

FMN is bound by residues Ser10, 16 to 18, and 91 to 94; these read SQS and MYNF.

The protein belongs to the azoreductase type 1 family. As to quaternary structure, homodimer. FMN serves as cofactor.

It carries out the reaction 2 a quinone + NADH + H(+) = 2 a 1,4-benzosemiquinone + NAD(+). It catalyses the reaction N,N-dimethyl-1,4-phenylenediamine + anthranilate + 2 NAD(+) = 2-(4-dimethylaminophenyl)diazenylbenzoate + 2 NADH + 2 H(+). Quinone reductase that provides resistance to thiol-specific stress caused by electrophilic quinones. Its function is as follows. Also exhibits azoreductase activity. Catalyzes the reductive cleavage of the azo bond in aromatic azo compounds to the corresponding amines. The polypeptide is FMN-dependent NADH:quinone oxidoreductase (Aeromonas salmonicida (strain A449)).